A 329-amino-acid chain; its full sequence is Ribosomal protein L11 methyltransferase (329 aa).

S-adenosyl-L-methionine-binding residues include Thr-177, Gly-198, Asp-220, and Asn-264.

The protein belongs to the methyltransferase superfamily. PrmA family.

Its subcellular location is the cytoplasm. It carries out the reaction L-lysyl-[protein] + 3 S-adenosyl-L-methionine = N(6),N(6),N(6)-trimethyl-L-lysyl-[protein] + 3 S-adenosyl-L-homocysteine + 3 H(+). Methylates ribosomal protein L11. The protein is Ribosomal protein L11 methyltransferase of Helicobacter pylori (strain Shi470).